The sequence spans 87 residues: U14-lycotoxin-Ls1a (87 aa).

The N-terminal stretch at 1–20 is a signal peptide; that stretch reads MNSKVFAVLLLLALLTCVLS. A WAP domain is found at 21–66; that stretch reads EKYCPTPRNTSCKKMNIRNNCCRDSDCTSNAFCCAEPCGNFCHKAS. 5 cysteine pairs are disulfide-bonded: Cys-24–Cys-54, Cys-32–Cys-58, Cys-41–Cys-53, Cys-42–Cys-80, and Cys-47–Cys-62.

Belongs to the venom protein 11 family. 01 (wap-1) subfamily. Post-translationally, contains 5 disulfide bonds. In terms of tissue distribution, expressed by the venom gland.

It localises to the secreted. Its function is as follows. Has antibacterial activity. This Lycosa singoriensis (Wolf spider) protein is U14-lycotoxin-Ls1a.